The following is a 172-amino-acid chain: Peptidyl-prolyl cis-trans isomerase (172 aa).

The PPIase cyclophilin-type domain occupies 7-170; that stretch reads FFDMAIAGNP…RPVTIADCGQ (164 aa).

This sequence belongs to the cyclophilin-type PPIase family. Expressed in meristematic tissues, with higher levels in nodules.

It localises to the cytoplasm. The enzyme catalyses [protein]-peptidylproline (omega=180) = [protein]-peptidylproline (omega=0). Its activity is regulated as follows. Binds cyclosporin A (CsA). CsA mediates some of its effects via an inhibitory action on PPIase. In terms of biological role, PPIases accelerate the folding of proteins. It catalyzes the cis-trans isomerization of proline imidic peptide bonds in oligopeptides. The chain is Peptidyl-prolyl cis-trans isomerase from Lupinus luteus (European yellow lupine).